The sequence spans 215 residues: Peptidyl-tRNA hydrolase (215 aa).

Tyr35 is a binding site for tRNA. His40 serves as the catalytic Proton acceptor. TRNA-binding residues include Tyr86, Asn88, and Asn134.

Belongs to the PTH family. In terms of assembly, monomer.

The protein localises to the cytoplasm. It carries out the reaction an N-acyl-L-alpha-aminoacyl-tRNA + H2O = an N-acyl-L-amino acid + a tRNA + H(+). Its function is as follows. Hydrolyzes ribosome-free peptidyl-tRNAs (with 1 or more amino acids incorporated), which drop off the ribosome during protein synthesis, or as a result of ribosome stalling. In terms of biological role, catalyzes the release of premature peptidyl moieties from peptidyl-tRNA molecules trapped in stalled 50S ribosomal subunits, and thus maintains levels of free tRNAs and 50S ribosomes. The sequence is that of Peptidyl-tRNA hydrolase from Bordetella parapertussis (strain 12822 / ATCC BAA-587 / NCTC 13253).